The chain runs to 477 residues: Trigger factor (477 aa).

A PPIase FKBP-type domain is found at 163 to 248 (ENLVIFDYKA…ITEVKKSEEV (86 aa)). Basic and acidic residues predominate over residues 408 to 461 (KAKPSKKEISKEEAEKILKEHQKQDHNHEHDHNHDHDHPEEKKASKSTKIEKKP). Residues 408–477 (KAKPSKKEIS…KPSTKKVSKK (70 aa)) are disordered.

Belongs to the FKBP-type PPIase family. Tig subfamily.

Its subcellular location is the cytoplasm. It catalyses the reaction [protein]-peptidylproline (omega=180) = [protein]-peptidylproline (omega=0). Involved in protein export. Acts as a chaperone by maintaining the newly synthesized protein in an open conformation. Functions as a peptidyl-prolyl cis-trans isomerase. This chain is Trigger factor, found in Pelagibacter ubique (strain HTCC1062).